We begin with the raw amino-acid sequence, 89 residues long: Small ribosomal subunit protein uS15 (89 aa).

Belongs to the universal ribosomal protein uS15 family. As to quaternary structure, part of the 30S ribosomal subunit. Forms a bridge to the 50S subunit in the 70S ribosome, contacting the 23S rRNA.

One of the primary rRNA binding proteins, it binds directly to 16S rRNA where it helps nucleate assembly of the platform of the 30S subunit by binding and bridging several RNA helices of the 16S rRNA. Functionally, forms an intersubunit bridge (bridge B4) with the 23S rRNA of the 50S subunit in the ribosome. In Streptococcus suis (strain 98HAH33), this protein is Small ribosomal subunit protein uS15.